Reading from the N-terminus, the 397-residue chain is CCA-adding enzyme (397 aa).

The ATP site is built by G26 and R29. CTP is bound by residues G26 and R29. Residues D39 and D41 each coordinate Mg(2+). R110, D153, R156, R159, and R162 together coordinate ATP. Residues R110, D153, R156, R159, and R162 each coordinate CTP.

The protein belongs to the tRNA nucleotidyltransferase/poly(A) polymerase family. Bacterial CCA-adding enzyme type 3 subfamily. In terms of assembly, homodimer. Mg(2+) serves as cofactor.

The enzyme catalyses a tRNA precursor + 2 CTP + ATP = a tRNA with a 3' CCA end + 3 diphosphate. It carries out the reaction a tRNA with a 3' CCA end + 2 CTP + ATP = a tRNA with a 3' CCACCA end + 3 diphosphate. Its function is as follows. Catalyzes the addition and repair of the essential 3'-terminal CCA sequence in tRNAs without using a nucleic acid template. Adds these three nucleotides in the order of C, C, and A to the tRNA nucleotide-73, using CTP and ATP as substrates and producing inorganic pyrophosphate. tRNA 3'-terminal CCA addition is required both for tRNA processing and repair. Also involved in tRNA surveillance by mediating tandem CCA addition to generate a CCACCA at the 3' terminus of unstable tRNAs. While stable tRNAs receive only 3'-terminal CCA, unstable tRNAs are marked with CCACCA and rapidly degraded. The polypeptide is CCA-adding enzyme (Bacillus cereus (strain G9842)).